Reading from the N-terminus, the 268-residue chain is Glutamate racemase (268 aa).

Substrate-binding positions include 10-11 (DS) and 42-43 (YG). Cysteine 73 serves as the catalytic Proton donor/acceptor. 74-75 (NT) provides a ligand contact to substrate. Cysteine 184 functions as the Proton donor/acceptor in the catalytic mechanism. 185–186 (TH) lines the substrate pocket.

The protein belongs to the aspartate/glutamate racemases family.

The enzyme catalyses L-glutamate = D-glutamate. It participates in cell wall biogenesis; peptidoglycan biosynthesis. Functionally, provides the (R)-glutamate required for cell wall biosynthesis. The polypeptide is Glutamate racemase (Limosilactobacillus fermentum (strain NBRC 3956 / LMG 18251) (Lactobacillus fermentum)).